Reading from the N-terminus, the 468-residue chain is 6-phospho-beta-galactosidase (468 aa).

Residues Q19, H116, N159, E160, and N297 each contribute to the D-galactose 6-phosphate site. Catalysis depends on E160, which acts as the Proton donor. E375 functions as the Nucleophile in the catalytic mechanism. D-galactose 6-phosphate is bound by residues S428, W429, K435, and Y437.

This sequence belongs to the glycosyl hydrolase 1 family.

It carries out the reaction a 6-phospho-beta-D-galactoside + H2O = D-galactose 6-phosphate + an alcohol. It functions in the pathway carbohydrate metabolism; lactose degradation; D-galactose 6-phosphate and beta-D-glucose from lactose 6-phosphate: step 1/1. In Streptococcus pyogenes serotype M5 (strain Manfredo), this protein is 6-phospho-beta-galactosidase.